The chain runs to 150 residues: Large ribosomal subunit protein bL9 (150 aa).

This sequence belongs to the bacterial ribosomal protein bL9 family.

Its function is as follows. Binds to the 23S rRNA. In Hamiltonella defensa subsp. Acyrthosiphon pisum (strain 5AT), this protein is Large ribosomal subunit protein bL9.